The sequence spans 765 residues: Cyanobacterial phytochrome A (765 aa).

A chromophore binding domain region spans residues 20 to 510 (IHLSGQIQPH…RKAIVNIVLR (491 aa)). One can recognise a GAF domain in the interval 152-320 (NLRDFCQIIV…VIFAEISARE (169 aa)). Residue Cys259 participates in a tetrapyrrole binding. One can recognise a Histidine kinase domain in the interval 535 to 748 (VASHDLQEPL…TFYFTIPVGG (214 aa)). The residue at position 538 (His538) is a Phosphohistidine; by autocatalysis.

This sequence in the N-terminal section; belongs to the phytochrome family. Contains one covalently linked tetrapyrrole chromophore.

It carries out the reaction ATP + protein L-histidine = ADP + protein N-phospho-L-histidine.. In terms of biological role, photoreceptor which exists in two forms that are reversibly interconvertible by light: the R form that absorbs maximally in the red region of the spectrum and the FR form that absorbs maximally in the far-red region. The protein is Cyanobacterial phytochrome A (aphA) of Nostoc sp. (strain PCC 7120 / SAG 25.82 / UTEX 2576).